The chain runs to 189 residues: Thymidine kinase (189 aa).

ATP-binding positions include 9–16 (GTMNSGKT) and 85–88 (DESQ). Glu86 functions as the Proton acceptor in the catalytic mechanism. Residues Cys143, Cys146, Cys180, and His183 each contribute to the Zn(2+) site.

Belongs to the thymidine kinase family. Homotetramer.

It is found in the cytoplasm. It catalyses the reaction thymidine + ATP = dTMP + ADP + H(+). The sequence is that of Thymidine kinase from Streptococcus pyogenes serotype M6 (strain ATCC BAA-946 / MGAS10394).